Here is a 102-residue protein sequence, read N- to C-terminus: Small ribosomal subunit protein uS10 (102 aa).

This sequence belongs to the universal ribosomal protein uS10 family. In terms of assembly, part of the 30S ribosomal subunit.

Its function is as follows. Involved in the binding of tRNA to the ribosomes. In Mesorhizobium japonicum (strain LMG 29417 / CECT 9101 / MAFF 303099) (Mesorhizobium loti (strain MAFF 303099)), this protein is Small ribosomal subunit protein uS10.